Reading from the N-terminus, the 204-residue chain is 3,4-dihydroxy-2-butanone 4-phosphate synthase (204 aa).

E30 lines the Mg(2+) pocket. D34 is a binding site for D-ribulose 5-phosphate. C59 carries the post-translational modification S-glutathionyl cysteine. D-ribulose 5-phosphate is bound by residues T85 and 142 to 146 (RRGHT). Residue H145 participates in Mg(2+) binding.

As to quaternary structure, homodimer. Mg(2+) serves as cofactor. Mn(2+) is required as a cofactor. S-glutathionylation is reversible and dependent on a glutaredoxin.

It catalyses the reaction D-ribulose 5-phosphate = (2S)-2-hydroxy-3-oxobutyl phosphate + formate + H(+). It functions in the pathway cofactor biosynthesis; riboflavin biosynthesis; 2-hydroxy-3-oxobutyl phosphate from D-ribulose 5-phosphate: step 1/1. In terms of biological role, catalyzes the conversion of D-ribulose 5-phosphate to formate and 3,4-dihydroxy-2-butanone 4-phosphate. The protein is 3,4-dihydroxy-2-butanone 4-phosphate synthase (RIB3) of Candida albicans (strain SC5314 / ATCC MYA-2876) (Yeast).